A 35-amino-acid polypeptide reads, in one-letter code: Pheromone-binding protein (35 aa).

It belongs to the PBP/GOBP family. As to expression, antenna.

Functionally, this major soluble protein in olfactory sensilla of male moths might serve to solubilize the extremely hydrophobic pheromone molecules and to transport pheromone through the aqueous lymph to receptors located on olfactory cilia. This Hyalophora cecropia (Cecropia moth) protein is Pheromone-binding protein.